The following is a 217-amino-acid chain: Hypersensitivity response secretion protein HrcR (217 aa).

4 helical membrane passes run 6–26 (FASLIVMAVAIALLPFAAMVV), 52–72 (MVLNGIAMIVSCFVMAPVGME), 158–178 (IGFLLYLAFIVIDLVIANLLM), and 190–210 (VAIPFKLLLFVVMDGWSVLIH).

Belongs to the FliP/MopC/SpaP family.

It is found in the cell membrane. Involved in the secretion of PopA, a proteinaceous elicitor of the hypersensitivity response in plants. The chain is Hypersensitivity response secretion protein HrcR (hrcR) from Ralstonia nicotianae (strain ATCC BAA-1114 / GMI1000) (Ralstonia solanacearum).